Consider the following 301-residue polypeptide: Polyamine aminopropyltransferase (301 aa).

In terms of domain architecture, PABS spans 4–240 (WHWLLEWQTP…GLWGFVYGGV (237 aa)). S-methyl-5'-thioadenosine is bound at residue glutamine 33. Spermidine is bound by residues histidine 64 and glutamate 89. Residues aspartate 109 and 141–142 (DG) contribute to the S-methyl-5'-thioadenosine site. Aspartate 159 functions as the Proton acceptor in the catalytic mechanism.

The protein belongs to the spermidine/spermine synthase family. As to quaternary structure, homodimer or homotetramer.

It is found in the cytoplasm. It catalyses the reaction S-adenosyl 3-(methylsulfanyl)propylamine + putrescine = S-methyl-5'-thioadenosine + spermidine + H(+). Its pathway is amine and polyamine biosynthesis; spermidine biosynthesis; spermidine from putrescine: step 1/1. Functionally, catalyzes the irreversible transfer of a propylamine group from the amino donor S-adenosylmethioninamine (decarboxy-AdoMet) to putrescine (1,4-diaminobutane) to yield spermidine. In Saccharolobus islandicus (strain Y.N.15.51 / Yellowstone #2) (Sulfolobus islandicus), this protein is Polyamine aminopropyltransferase.